The primary structure comprises 390 residues: Chorismate synthase (390 aa).

Position 48 (Arg-48) interacts with NADP(+). FMN contacts are provided by residues 126 to 128 (RAS), Gly-286, 301 to 305 (KPTSS), and Arg-328.

It belongs to the chorismate synthase family. It depends on FMNH2 as a cofactor.

The catalysed reaction is 5-O-(1-carboxyvinyl)-3-phosphoshikimate = chorismate + phosphate. The protein operates within metabolic intermediate biosynthesis; chorismate biosynthesis; chorismate from D-erythrose 4-phosphate and phosphoenolpyruvate: step 7/7. Functionally, catalyzes the anti-1,4-elimination of the C-3 phosphate and the C-6 proR hydrogen from 5-enolpyruvylshikimate-3-phosphate (EPSP) to yield chorismate, which is the branch point compound that serves as the starting substrate for the three terminal pathways of aromatic amino acid biosynthesis. This reaction introduces a second double bond into the aromatic ring system. The protein is Chorismate synthase of Sulfurisphaera tokodaii (strain DSM 16993 / JCM 10545 / NBRC 100140 / 7) (Sulfolobus tokodaii).